The primary structure comprises 354 residues: Ferredoxin--NADP reductase 2 (354 aa).

FAD-binding residues include Thr-14, Asp-33, Gln-41, Tyr-46, Ala-86, Phe-121, Asp-289, and Thr-330.

The protein belongs to the ferredoxin--NADP reductase type 2 family. In terms of assembly, homodimer. FAD serves as cofactor.

It catalyses the reaction 2 reduced [2Fe-2S]-[ferredoxin] + NADP(+) + H(+) = 2 oxidized [2Fe-2S]-[ferredoxin] + NADPH. The protein is Ferredoxin--NADP reductase 2 of Christiangramia forsetii (strain DSM 17595 / CGMCC 1.15422 / KT0803) (Gramella forsetii).